The primary structure comprises 580 residues: Putative monoterpene synthase 8 (580 aa).

The transit peptide at 1 to 44 directs the protein to the chloroplast; that stretch reads MACTSNLSSLSKSWAVLDVPRGAPKATGLWLKRQFIFKTSRICM. Residues aspartate 333, aspartate 337, aspartate 478, threonine 482, and glutamate 486 each contribute to the Mg(2+) site. The DDXXD motif motif lies at 333 to 337; sequence DDIFD.

The protein belongs to the terpene synthase family. Tpsg subfamily. Monomer. The cofactor is Mg(2+). Requires Mn(2+) as cofactor. In terms of tissue distribution, confined to flowers.

The protein localises to the plastid. It is found in the chloroplast. It participates in secondary metabolite biosynthesis; terpenoid biosynthesis. In terms of biological role, monoterpene synthase (mono-TPS) involved in the biosynthesis of monoterpenes natural products, constituent of coffee beverage aroma. This Coffea arabica (Arabian coffee) protein is Putative monoterpene synthase 8.